We begin with the raw amino-acid sequence, 290 residues long: Acetyl-coenzyme A carboxylase carboxyl transferase subunit beta (290 aa).

The CoA carboxyltransferase N-terminal domain maps to 28-290 (LMNKCSKCGT…TVREGLSHGG (263 aa)). Residues cysteine 32, cysteine 35, cysteine 51, and cysteine 54 each coordinate Zn(2+). A C4-type zinc finger spans residues 32–54 (CSKCGTIQYSKELDKNLKVCSSC).

The protein belongs to the AccD/PCCB family. Acetyl-CoA carboxylase is a heterohexamer composed of biotin carboxyl carrier protein (AccB), biotin carboxylase (AccC) and two subunits each of ACCase subunit alpha (AccA) and ACCase subunit beta (AccD). The cofactor is Zn(2+).

The protein localises to the cytoplasm. The enzyme catalyses N(6)-carboxybiotinyl-L-lysyl-[protein] + acetyl-CoA = N(6)-biotinyl-L-lysyl-[protein] + malonyl-CoA. It participates in lipid metabolism; malonyl-CoA biosynthesis; malonyl-CoA from acetyl-CoA: step 1/1. In terms of biological role, component of the acetyl coenzyme A carboxylase (ACC) complex. Biotin carboxylase (BC) catalyzes the carboxylation of biotin on its carrier protein (BCCP) and then the CO(2) group is transferred by the transcarboxylase to acetyl-CoA to form malonyl-CoA. This is Acetyl-coenzyme A carboxylase carboxyl transferase subunit beta from Paenibacillus sp. (strain JDR-2).